A 178-amino-acid polypeptide reads, in one-letter code: uncharacterized protein (178 aa).

Transmembrane regions (helical) follow at residues 3–23 (IPIILTLMLFSLGFIFGFISI), 56–76 (IFLMLAGSITFGLSTFINLIF), 101–121 (LILPHGIFEISAMLISAVAGF), and 150–170 (LSLISIILIVIAAFIEVYITP).

To M.jannaschii MJ0706 and Synechocystis PCC 6803 slr1478.

The protein resides in the cell membrane. This is an uncharacterized protein from Methanocaldococcus jannaschii (strain ATCC 43067 / DSM 2661 / JAL-1 / JCM 10045 / NBRC 100440) (Methanococcus jannaschii).